The primary structure comprises 409 residues: Probable tRNA N6-adenosine threonylcarbamoyltransferase, mitochondrial (409 aa).

The N-terminal 31 residues, 1 to 31, are a transit peptide targeting the mitochondrion; the sequence is MHALRNFAGNGIANVFGCGIRRRLSYVLGIE. His135 and His139 together coordinate a divalent metal cation. Substrate contacts are provided by residues 159–163, Asp192, Gly212, Glu216, 322–323, and Ser350; these read LASGG and NN. Asp351 provides a ligand contact to a divalent metal cation.

This sequence belongs to the KAE1 / TsaD family. Homodimer. A divalent metal cation serves as cofactor.

It localises to the mitochondrion. The catalysed reaction is L-threonylcarbamoyladenylate + adenosine(37) in tRNA = N(6)-L-threonylcarbamoyladenosine(37) in tRNA + AMP + H(+). Its function is as follows. Required for the formation of a threonylcarbamoyl group on adenosine at position 37 (t(6)A37) in mitochondrial tRNAs that read codons beginning with adenine. Probably involved in the transfer of the threonylcarbamoyl moiety of threonylcarbamoyl-AMP (TC-AMP) to the N6 group of A37. Involved in mitochondrial genome maintenance. This Drosophila melanogaster (Fruit fly) protein is Probable tRNA N6-adenosine threonylcarbamoyltransferase, mitochondrial.